Here is a 382-residue protein sequence, read N- to C-terminus: D-galactonate dehydratase (382 aa).

Aspartate 183 is a Mg(2+) binding site. Catalysis depends on histidine 185, which acts as the Proton donor. Mg(2+)-binding residues include glutamate 209 and glutamate 235. The active-site Proton acceptor is the histidine 285.

Belongs to the mandelate racemase/muconate lactonizing enzyme family. GalD subfamily. It depends on Mg(2+) as a cofactor.

The catalysed reaction is D-galactonate = 2-dehydro-3-deoxy-D-galactonate + H2O. Its pathway is carbohydrate acid metabolism; D-galactonate degradation; D-glyceraldehyde 3-phosphate and pyruvate from D-galactonate: step 1/3. Its function is as follows. Catalyzes the dehydration of D-galactonate to 2-keto-3-deoxy-D-galactonate. The polypeptide is D-galactonate dehydratase (Klebsiella pneumoniae subsp. pneumoniae (strain ATCC 700721 / MGH 78578)).